Consider the following 1368-residue polypeptide: DNA-directed RNA polymerase subunit beta (1368 aa).

Belongs to the RNA polymerase beta chain family. The RNAP catalytic core consists of 2 alpha, 1 beta, 1 beta' and 1 omega subunit. When a sigma factor is associated with the core the holoenzyme is formed, which can initiate transcription.

The enzyme catalyses RNA(n) + a ribonucleoside 5'-triphosphate = RNA(n+1) + diphosphate. DNA-dependent RNA polymerase catalyzes the transcription of DNA into RNA using the four ribonucleoside triphosphates as substrates. The sequence is that of DNA-directed RNA polymerase subunit beta from Legionella pneumophila (strain Lens).